Reading from the N-terminus, the 1104-residue chain is Extended synaptotagmin-1 (1104 aa).

Methionine 1 carries the N-acetylmethionine modification. At 1–38 (MERSPGEGPSPSPMDQPSAPSDPTDQPPAAHAKPDPGS) the chain is on the cytoplasmic side. The interval 1-48 (MERSPGEGPSPSPMDQPSAPSDPTDQPPAAHAKPDPGSGGQPAGPGAA) is disordered. Residues 37–47 (GSGGQPAGPGA) show a composition bias toward gly residues. Residues 39 to 59 (GGQPAGPGAAGEALAVLTSFG) form a helical membrane-spanning segment. Residues 60 to 62 (RRL) lie on the Lumenal side of the membrane. The helical transmembrane segment at 63-83 (LVLIPVYLAGAVGLSVGFVLF) threads the bilayer. Over 84–1104 (GLALYLGWRR…LMDNKDKGSS (1021 aa)) the chain is Cytoplasmic. Residues 91–116 (WRRVRDEKERSLRAARQLLDDEEQLT) are a coiled coil. Residues 135-313 (DVEKAEWLNK…LPNRLLVPLV (179 aa)) enclose the SMP-LTD domain. C2 domains are found at residues 312-433 (LVPD…DDWF), 460-580 (QVLQ…QLSS), 627-751 (SVDA…DEWL), and 777-899 (LEEV…TLSS). The residue at position 324 (serine 324) is a Phosphoserine; by CDK5. Lysine 344, aspartate 345, aspartate 357, aspartate 404, aspartate 406, aspartate 408, aspartate 410, and aspartate 411 together coordinate Ca(2+). Residues 617–641 (VDSENPQRGSSVDAPPRPCHTTPDS) form a disordered region. Lysine 817 carries the N6-acetyllysine modification. Phosphoserine occurs at positions 820 and 941. A disordered region spans residues 924–950 (SHSYSHSSSSLSEEPELSGGPPHITSS). Residues 925 to 946 (HSYSHSSSSLSEEPELSGGPPH) are compositionally biased toward low complexity. Phosphothreonine is present on threonine 948. A phosphoserine mark is found at serine 949 and serine 963. In terms of domain architecture, C2 5 spans 971–1093 (PLGQVKLTLW…DLSQGVARWY (123 aa)). Residue tyrosine 1009 is modified to Phosphotyrosine. A required for phosphatidylinositol 4,5-bisphosphate-dependent location at the cell membrane region spans residues 1018–1025 (KNRGTKRR). Residue serine 1034 is modified to Phosphoserine.

Belongs to the extended synaptotagmin family. In terms of assembly, interacts with ESYT2 and ESYT3. Interacts with ADGRD1; inhibiting the G-protein-coupled receptor activity of ADGRD1. Interaction with ADGRD1 is abolished when cytosolic calcium increases, relieving ADGRD1 G-protein-coupled receptor activity. Interacts (phosphorylated form) with SLC2A4. In terms of processing, phosphorylated on Ser residues in insulin-treated adipocytes (in vitro); this promotes interaction with SLC2A4. As to expression, widely expressed.

It localises to the endoplasmic reticulum membrane. The protein localises to the cell membrane. In terms of biological role, binds calcium (via the C2 domains) and translocates to sites of contact between the endoplasmic reticulum and the cell membrane in response to increased cytosolic calcium levels. Helps tether the endoplasmic reticulum to the cell membrane and promotes the formation of appositions between the endoplasmic reticulum and the cell membrane. Acts as an inhibitor of ADGRD1 G-protein-coupled receptor activity in absence of cytosolic calcium. Binds glycerophospholipids in a barrel-like domain and may play a role in cellular lipid transport. This chain is Extended synaptotagmin-1, found in Homo sapiens (Human).